The chain runs to 458 residues: Probable threonine--tRNA ligase, cytoplasmic (458 aa).

Residues 41–104 (DPIKITLLPD…EGDCSLEIFG (64 aa)) form the TGS domain.

It belongs to the class-II aminoacyl-tRNA synthetase family.

The protein resides in the cytoplasm. The catalysed reaction is tRNA(Thr) + L-threonine + ATP = L-threonyl-tRNA(Thr) + AMP + diphosphate + H(+). The protein is Probable threonine--tRNA ligase, cytoplasmic of Arabidopsis thaliana (Mouse-ear cress).